A 99-amino-acid polypeptide reads, in one-letter code: Leydig cell tumor 10 kDa protein homolog (99 aa).

The interval 1 to 36 (MAQGQRKFQAHKPAKSKTAAAASEKNRGPRKGGRVI) is disordered.

The protein belongs to the UPF0390 family.

Functionally, may have a potential role in hypercalcemia of malignancy. In Homo sapiens (Human), this protein is Leydig cell tumor 10 kDa protein homolog (C19orf53).